A 319-amino-acid polypeptide reads, in one-letter code: Thymidylate synthase (319 aa).

Residues Arg-25 and 181 to 182 (RR) each bind dUMP. Cys-201 (nucleophile) is an active-site residue. Residues 221 to 224 (RSAD), Asn-232, and 262 to 264 (HIY) each bind dUMP. (6R)-5,10-methylene-5,6,7,8-tetrahydrofolate is bound at residue Asp-224. Ala-318 contributes to the (6R)-5,10-methylene-5,6,7,8-tetrahydrofolate binding site.

The protein belongs to the thymidylate synthase family. Bacterial-type ThyA subfamily. As to quaternary structure, homodimer.

The protein localises to the cytoplasm. The catalysed reaction is dUMP + (6R)-5,10-methylene-5,6,7,8-tetrahydrofolate = 7,8-dihydrofolate + dTMP. Its pathway is pyrimidine metabolism; dTTP biosynthesis. In terms of biological role, catalyzes the reductive methylation of 2'-deoxyuridine-5'-monophosphate (dUMP) to 2'-deoxythymidine-5'-monophosphate (dTMP) while utilizing 5,10-methylenetetrahydrofolate (mTHF) as the methyl donor and reductant in the reaction, yielding dihydrofolate (DHF) as a by-product. This enzymatic reaction provides an intracellular de novo source of dTMP, an essential precursor for DNA biosynthesis. In Oenococcus oeni (strain ATCC BAA-331 / PSU-1), this protein is Thymidylate synthase.